Reading from the N-terminus, the 350-residue chain is Probable transposase-like protein At4g04430 (350 aa).

Disordered stretches follow at residues M1 to N57 and Q307 to N328. The span at S30–V43 shows a compositional bias: low complexity.

Belongs to the transposase 24 family.

In Arabidopsis thaliana (Mouse-ear cress), this protein is Probable transposase-like protein At4g04430.